The following is a 279-amino-acid chain: Pantothenate synthetase (279 aa).

Met-31–His-38 serves as a coordination point for ATP. The Proton donor role is filled by His-38. Gln-62 is a (R)-pantoate binding site. Residue Gln-62 coordinates beta-alanine. An ATP-binding site is contributed by Gly-148–Asp-151. Gln-154 contributes to the (R)-pantoate binding site. ATP contacts are provided by residues Val-177 and Leu-185–Arg-188.

It belongs to the pantothenate synthetase family. Homodimer.

The protein localises to the cytoplasm. The enzyme catalyses (R)-pantoate + beta-alanine + ATP = (R)-pantothenate + AMP + diphosphate + H(+). It participates in cofactor biosynthesis; (R)-pantothenate biosynthesis; (R)-pantothenate from (R)-pantoate and beta-alanine: step 1/1. In terms of biological role, catalyzes the condensation of pantoate with beta-alanine in an ATP-dependent reaction via a pantoyl-adenylate intermediate. The protein is Pantothenate synthetase of Cereibacter sphaeroides (strain ATCC 17029 / ATH 2.4.9) (Rhodobacter sphaeroides).